The primary structure comprises 154 residues: Aspartate carbamoyltransferase regulatory chain (154 aa).

Residues C109, C114, C138, and C141 each contribute to the Zn(2+) site.

Belongs to the PyrI family. Contains catalytic and regulatory chains. It depends on Zn(2+) as a cofactor.

In terms of biological role, involved in allosteric regulation of aspartate carbamoyltransferase. The sequence is that of Aspartate carbamoyltransferase regulatory chain from Aeromonas hydrophila subsp. hydrophila (strain ATCC 7966 / DSM 30187 / BCRC 13018 / CCUG 14551 / JCM 1027 / KCTC 2358 / NCIMB 9240 / NCTC 8049).